A 155-amino-acid polypeptide reads, in one-letter code: Protein SREK1IP1 (155 aa).

The CCHC-type zinc-finger motif lies at 13-30 (AGCKKCGYPGHLTFECRN). The interval 44 to 155 (VSSTSSEDSD…TPNSSEFSRK (112 aa)) is disordered. Residue Ser52 is modified to Phosphoserine. Over residues 66 to 84 (QEKRINEEEEKKKEKSKEK) the composition is skewed to basic and acidic residues. Positions 85–94 (IKLKKKRKRS) are enriched in basic residues. Phosphoserine occurs at positions 96 and 97. Over residues 107-142 (QKKQKYQKKEKKKEKKSKSKKGKHHKKEKKKRKKEK) the composition is skewed to basic residues. The residue at position 146 (Thr146) is a Phosphothreonine. Residues 146-155 (TPNSSEFSRK) are compositionally biased toward polar residues.

Interacts with SREK1/SFRS12.

Functionally, possible splicing regulator involved in the control of cellular survival. This chain is Protein SREK1IP1 (SREK1IP1), found in Homo sapiens (Human).